Here is a 126-residue protein sequence, read N- to C-terminus: Ribosome-binding factor A (126 aa).

Belongs to the RbfA family. Monomer. Binds 30S ribosomal subunits, but not 50S ribosomal subunits or 70S ribosomes.

The protein localises to the cytoplasm. One of several proteins that assist in the late maturation steps of the functional core of the 30S ribosomal subunit. Associates with free 30S ribosomal subunits (but not with 30S subunits that are part of 70S ribosomes or polysomes). Required for efficient processing of 16S rRNA. May interact with the 5'-terminal helix region of 16S rRNA. This is Ribosome-binding factor A from Geobacillus sp. (strain WCH70).